A 369-amino-acid polypeptide reads, in one-letter code: Flagellar P-ring protein (369 aa).

The signal sequence occupies residues methionine 1 to alanine 22.

This sequence belongs to the FlgI family. In terms of assembly, the basal body constitutes a major portion of the flagellar organelle and consists of four rings (L,P,S, and M) mounted on a central rod.

Its subcellular location is the periplasm. The protein resides in the bacterial flagellum basal body. Its function is as follows. Assembles around the rod to form the L-ring and probably protects the motor/basal body from shearing forces during rotation. The chain is Flagellar P-ring protein from Pseudomonas putida (strain ATCC 47054 / DSM 6125 / CFBP 8728 / NCIMB 11950 / KT2440).